Here is a 322-residue protein sequence, read N- to C-terminus: Cytochrome f (322 aa).

An N-terminal signal peptide occupies residues methionine 1–serine 35. Tyrosine 38, cysteine 58, cysteine 61, and histidine 62 together coordinate heme. A helical membrane pass occupies residues valine 288–lysine 308.

It belongs to the cytochrome f family. The 4 large subunits of the cytochrome b6-f complex are cytochrome b6, subunit IV (17 kDa polypeptide, petD), cytochrome f and the Rieske protein, while the 4 small subunits are PetG, PetL, PetM and PetN. The complex functions as a dimer. It depends on heme as a cofactor.

The protein localises to the plastid. Its subcellular location is the chloroplast thylakoid membrane. Component of the cytochrome b6-f complex, which mediates electron transfer between photosystem II (PSII) and photosystem I (PSI), cyclic electron flow around PSI, and state transitions. This is Cytochrome f from Aethionema cordifolium (Lebanon stonecress).